The primary structure comprises 463 residues: uncharacterized protein (463 aa).

This is an uncharacterized protein from Lepidoptera (butterflies and moths).